The chain runs to 662 residues: Acetyl-coenzyme A synthetase (662 aa).

CoA contacts are provided by residues arginine 197–lysine 200 and threonine 317. Residues glycine 393–proline 395, aspartate 417–threonine 422, aspartate 510, and arginine 525 each bind ATP. Residue serine 533 coordinates CoA. Arginine 536 is an ATP binding site. Mg(2+)-binding residues include histidine 549 and valine 552. An N6-acetyllysine modification is found at lysine 623.

Belongs to the ATP-dependent AMP-binding enzyme family. Mg(2+) is required as a cofactor. Post-translationally, acetylated. Deacetylation by the SIR2-homolog deacetylase activates the enzyme.

It catalyses the reaction acetate + ATP + CoA = acetyl-CoA + AMP + diphosphate. Its function is as follows. Catalyzes the conversion of acetate into acetyl-CoA (AcCoA), an essential intermediate at the junction of anabolic and catabolic pathways. AcsA undergoes a two-step reaction. In the first half reaction, AcsA combines acetate with ATP to form acetyl-adenylate (AcAMP) intermediate. In the second half reaction, it can then transfer the acetyl group from AcAMP to the sulfhydryl group of CoA, forming the product AcCoA. The polypeptide is Acetyl-coenzyme A synthetase (Helicobacter acinonychis (strain Sheeba)).